The primary structure comprises 98 residues: NADH-ubiquinone oxidoreductase chain 4L (98 aa).

3 consecutive transmembrane segments (helical) span residues 1-21, 29-49, and 58-78; these read MPII…GMLT, SLLC…LMAL, and IVPI…LSLL.

Belongs to the complex I subunit 4L family. As to quaternary structure, core subunit of respiratory chain NADH dehydrogenase (Complex I) which is composed of 45 different subunits.

It localises to the mitochondrion inner membrane. The enzyme catalyses a ubiquinone + NADH + 5 H(+)(in) = a ubiquinol + NAD(+) + 4 H(+)(out). Functionally, core subunit of the mitochondrial membrane respiratory chain NADH dehydrogenase (Complex I) which catalyzes electron transfer from NADH through the respiratory chain, using ubiquinone as an electron acceptor. Part of the enzyme membrane arm which is embedded in the lipid bilayer and involved in proton translocation. This Presbytis melalophos (Mitred leaf monkey) protein is NADH-ubiquinone oxidoreductase chain 4L (MT-ND4L).